We begin with the raw amino-acid sequence, 318 residues long: Ubiquitin-like domain-containing CTD phosphatase 1 (318 aa).

The 79-residue stretch at 3-81 folds into the Ubiquitin-like domain; the sequence is LSLIIKWGGQ…IMMMGTREES (79 aa). Residues 133-294 enclose the FCP1 homology domain; that stretch reads PREGKKLLVL…LKLSQYLKEI (162 aa). Aspartate 143, aspartate 145, and aspartate 253 together coordinate Mg(2+).

It depends on Mg(2+) as a cofactor.

The protein resides in the nucleus. The catalysed reaction is O-phospho-L-seryl-[protein] + H2O = L-seryl-[protein] + phosphate. The enzyme catalyses O-phospho-L-threonyl-[protein] + H2O = L-threonyl-[protein] + phosphate. In terms of biological role, dephosphorylates 26S nuclear proteasomes, thereby decreasing their proteolytic activity. Recruited to the 19S regulatory particle of the 26S proteasome where it dephosphorylates 19S component psmc2 which impairs psmc2 ATPase activity and disrupts 26S proteasome assembly. Has also been reported to stimulate the proteolytic activity of the 26S proteasome. This is Ubiquitin-like domain-containing CTD phosphatase 1 (ublcp1) from Xenopus tropicalis (Western clawed frog).